The sequence spans 309 residues: Ribosomal RNA small subunit methyltransferase H (309 aa).

S-adenosyl-L-methionine is bound by residues 34–36 (GGH), Asp-54, Phe-80, Asp-102, and Gln-109.

The protein belongs to the methyltransferase superfamily. RsmH family.

It localises to the cytoplasm. It catalyses the reaction cytidine(1402) in 16S rRNA + S-adenosyl-L-methionine = N(4)-methylcytidine(1402) in 16S rRNA + S-adenosyl-L-homocysteine + H(+). Specifically methylates the N4 position of cytidine in position 1402 (C1402) of 16S rRNA. This is Ribosomal RNA small subunit methyltransferase H from Cellvibrio japonicus (strain Ueda107) (Pseudomonas fluorescens subsp. cellulosa).